A 327-amino-acid polypeptide reads, in one-letter code: Porphobilinogen deaminase (327 aa).

Position 250 is an S-(dipyrrolylmethanemethyl)cysteine (Cys-250).

This sequence belongs to the HMBS family. In terms of assembly, monomer. Dipyrromethane serves as cofactor.

It carries out the reaction 4 porphobilinogen + H2O = hydroxymethylbilane + 4 NH4(+). It participates in porphyrin-containing compound metabolism; protoporphyrin-IX biosynthesis; coproporphyrinogen-III from 5-aminolevulinate: step 2/4. In terms of biological role, tetrapolymerization of the monopyrrole PBG into the hydroxymethylbilane pre-uroporphyrinogen in several discrete steps. The protein is Porphobilinogen deaminase of Paraburkholderia phymatum (strain DSM 17167 / CIP 108236 / LMG 21445 / STM815) (Burkholderia phymatum).